Reading from the N-terminus, the 1034-residue chain is Protein ITPRID1 (1034 aa).

3 disordered regions span residues 223-290, 442-486, and 624-678; these read KTQQ…PTKP, QVSS…KSMT, and QSSL…SSWS. Composition is skewed to polar residues over residues 443–453 and 465–476; these read VSSMTGSQSPT and HSPASQQDSLQE. The segment covering 477–486 has biased composition (low complexity); that stretch reads SYGSKSKSMT. The span at 669 to 678 shows a compositional bias: polar residues; sequence TDSNAASSWS. Residues 843 to 902 adopt a coiled-coil conformation; that stretch reads EMETMKMVCQSFREHLEEIEQHFMGQQALYPRDMSEEEREEAEYLRTLREALRQQVAELA.

In Mus musculus (Mouse), this protein is Protein ITPRID1 (Itprid1).